The primary structure comprises 694 residues: Acetyl-coenzyme A synthetase (694 aa).

Positions 1–23 are disordered; that stretch reads MSDKRPRSPCSNNNDELNDSSVL. Positions 9-23 are enriched in polar residues; that stretch reads PCSNNNDELNDSSVL. CoA contacts are provided by residues 229–232 and Thr347; that span reads RGKK. ATP contacts are provided by residues 423–425, 447–452, Asp536, and Arg551; these read GEP and DTYWQT. Residue Ser559 coordinates CoA. Arg562 lines the ATP pocket. Arg628 lines the CoA pocket.

Belongs to the ATP-dependent AMP-binding enzyme family.

It catalyses the reaction acetate + ATP + CoA = acetyl-CoA + AMP + diphosphate. This is Acetyl-coenzyme A synthetase (ACS) from Cryptosporidium parvum.